The primary structure comprises 188 residues: Elongation factor P (188 aa).

Belongs to the elongation factor P family.

The protein resides in the cytoplasm. It participates in protein biosynthesis; polypeptide chain elongation. Functionally, involved in peptide bond synthesis. Stimulates efficient translation and peptide-bond synthesis on native or reconstituted 70S ribosomes in vitro. Probably functions indirectly by altering the affinity of the ribosome for aminoacyl-tRNA, thus increasing their reactivity as acceptors for peptidyl transferase. This chain is Elongation factor P, found in Cellvibrio japonicus (strain Ueda107) (Pseudomonas fluorescens subsp. cellulosa).